Reading from the N-terminus, the 351-residue chain is Transmembrane and coiled-coil domain-containing protein 5B (351 aa).

A coiled-coil region spans residues 17–214 (EIPKLEITKQ…WRSSIQSAKT (198 aa)). The helical transmembrane segment at 292–312 (IFVVMIFFRLLGYVLFYLQYI) threads the bilayer.

It belongs to the TMCO5 family.

It is found in the membrane. The protein is Transmembrane and coiled-coil domain-containing protein 5B (TMCO5B) of Bos taurus (Bovine).